The chain runs to 273 residues: Putative phosphoenolpyruvate synthase regulatory protein (273 aa).

154-161 lines the ADP pocket; the sequence is GVSRSGKT.

This sequence belongs to the pyruvate, phosphate/water dikinase regulatory protein family. PSRP subfamily.

It carries out the reaction [pyruvate, water dikinase] + ADP = [pyruvate, water dikinase]-phosphate + AMP + H(+). The enzyme catalyses [pyruvate, water dikinase]-phosphate + phosphate + H(+) = [pyruvate, water dikinase] + diphosphate. Bifunctional serine/threonine kinase and phosphorylase involved in the regulation of the phosphoenolpyruvate synthase (PEPS) by catalyzing its phosphorylation/dephosphorylation. This chain is Putative phosphoenolpyruvate synthase regulatory protein, found in Halorhodospira halophila (strain DSM 244 / SL1) (Ectothiorhodospira halophila (strain DSM 244 / SL1)).